A 246-amino-acid polypeptide reads, in one-letter code: Ly6/PLAUR domain-containing protein 4 (246 aa).

Positions 1-26 (MILQAWRSLQLLYLLEAISLLPCTEA) are cleaved as a signal peptide. Asn-117 carries N-linked (GlcNAc...) asparagine glycosylation. Positions 142–223 (CPSCVGKHDQ…INVLDKSEAV (82 aa)) constitute a UPAR/Ly6 domain. Ala-225 is lipidated: GPI-anchor amidated alanine. A propeptide spans 226 to 246 (GHCSQGISWSVLLCLLILLRD) (removed in mature form).

Its subcellular location is the cell membrane. The chain is Ly6/PLAUR domain-containing protein 4 (Lypd4) from Mus musculus (Mouse).